The chain runs to 336 residues: N-acetylornithine carbamoyltransferase (336 aa).

Residues 49–52, Trp77, and Arg112 each bind carbamoyl phosphate; that span reads SMRT. Glu144 lines the N(2)-acetyl-L-ornithine pocket. A carbamoyl phosphate-binding site is contributed by 148–151; the sequence is HPCQ. N(2)-acetyl-L-ornithine is bound by residues Lys252 and Leu295. 294 to 295 serves as a coordination point for carbamoyl phosphate; sequence CL. Lys302 is subject to N6-carboxylysine. Residue Arg322 participates in carbamoyl phosphate binding.

Belongs to the aspartate/ornithine carbamoyltransferase superfamily. AOTCase family. As to quaternary structure, homotrimer.

It localises to the cytoplasm. The enzyme catalyses N(2)-acetyl-L-ornithine + carbamoyl phosphate = N(2)-acetyl-L-citrulline + phosphate + H(+). It functions in the pathway amino-acid biosynthesis; L-arginine biosynthesis. Carboxylation at Lys-302 increases the catalytic activity of the enzyme. Functionally, catalyzes the transfer of the carbamoyl group from carbamoyl phosphate to the delta-amino group of N(2)-acetyl-L-ornithine to produce N(2)-acetyl-L-citrulline. This is a step in an alternative arginine biosynthesis pathway. The enzyme has no activity with ornithine. In Xylella fastidiosa (strain 9a5c), this protein is N-acetylornithine carbamoyltransferase.